The sequence spans 307 residues: Taste receptor type 2 member 41 (307 aa).

The Extracellular portion of the chain corresponds to 1–7 (MQAALTA). A helical transmembrane segment spans residues 8-28 (FFMLLFSLLSLLGIAANGFIV). Topologically, residues 29-40 (LVLGREWLRYGR) are cytoplasmic. Residues 41-61 (LLPLDMILISLGASRFCLQLV) traverse the membrane as a helical segment. Residues 62–88 (GTVHNFYYSAQKVEYSGGLGRQFFHLH) are Extracellular-facing. Residues 89–109 (WHFLNSATFWFCSWLSVLFCV) form a helical membrane-spanning segment. Residues 110-129 (KIANITHPTFLWLKWRFPGW) are Cytoplasmic-facing. The helical transmembrane segment at 130–150 (VPWLLLGSVLISFIITLLFFW) threads the bilayer. Residues 151-183 (VNYPAYQEFLIRKFSVNMTYKWNTRIETYYFPS) are Extracellular-facing. Residue asparagine 167 is glycosylated (N-linked (GlcNAc...) asparagine). Residues 184–204 (LKLVIWSIPFSVFLVSIMLLI) form a helical membrane-spanning segment. At 205 to 234 (NSLRRHTQRMQHNGHSLQDPSTQAHTRALK) the chain is on the cytoplasmic side. A helical membrane pass occupies residues 235-255 (SLISFLILYALSFLSLIIDAT). Topologically, residues 256–264 (KFISMQNDF) are extracellular. A helical membrane pass occupies residues 265–285 (YWPWQIAVYLCISVHPFILIF). Residues 286 to 307 (SNLKLRSVFSQLLLLARGFWVA) are Cytoplasmic-facing.

The protein belongs to the G-protein coupled receptor T2R family.

It localises to the membrane. Receptor that may play a role in the perception of bitterness and is gustducin-linked. May play a role in sensing the chemical composition of the gastrointestinal content. The activity of this receptor may stimulate alpha gustducin, mediate PLC-beta-2 activation and lead to the gating of TRPM5. In Pan troglodytes (Chimpanzee), this protein is Taste receptor type 2 member 41 (TAS2R41).